Reading from the N-terminus, the 710-residue chain is MPEDAIGQQVPPEQEAAGAEPTSAARERHATLSLELTEHQYRYYVLDAPTISDAEFDERLRELAALEAEFPALRTPDSPTQRVGGAFSTDFTPVAHAERMMSLDNAFTDEELDAWAERVERDAGGPVPYLCELKVDGLAINLTYERGRLVRAATRGDGRTGEDVTANVRSIRDVPAELAPSAEFPEIPGLLEVRGEIYFPIAGFADLNAGLVEQGKAPFANPRNAAAGSLRQKDPRITASRPLRLVVHGIGARQGWQPSTQSESYAALRAWGLPTSDRWRVVPDLAGVAEYIAHYATHRHDVEHEIDGVVVKVDPVSIQGRLGSTSRAPRWAIAFKYPPEEVNTRLLDIDVNVGRTGRVTPFAVLEPVRVAGSTVALATLHNAREVRRKGVLIGDTVVIRKAGDVIPEVLGPVVELRPPDARSFVMPSTCPCCGTPLAPAKEGDVDIRCPNTRSCPAQLRERVFHLAGRGAFDIEVLGYKGAAALLDAQIITDEGDLFALDAAQLTRSPFFVNKDGSLGSNAVKLLDNLTVAKERELWRVLVALSIRHVGPTAAQALARHFRSIEAIDQAGEEELSAVDGVGPTIAASVREWFAVAWHREVVRKWAEAGVRMTEEAVDEGPRPLEGMTVVVTGTLAGFSRDQAAEAIQSRGGKVTGSVSKKTAFVVVGENPGTKADKAASLKVPVLDEEGFRVLLDAGPDAAREVARVED.

Positions 1–26 (MPEDAIGQQVPPEQEAAGAEPTSAAR) are disordered. NAD(+) is bound by residues 53 to 57 (DAEFD), 102 to 103 (SL), and Glu132. Residue Lys134 is the N6-AMP-lysine intermediate of the active site. Arg155, Glu196, Lys312, and Lys336 together coordinate NAD(+). Positions 430, 433, 449, and 455 each coordinate Zn(2+). Positions 619-708 (EGPRPLEGMT…PDAAREVARV (90 aa)) constitute a BRCT domain.

The protein belongs to the NAD-dependent DNA ligase family. LigA subfamily. It depends on Mg(2+) as a cofactor. The cofactor is Mn(2+).

It carries out the reaction NAD(+) + (deoxyribonucleotide)n-3'-hydroxyl + 5'-phospho-(deoxyribonucleotide)m = (deoxyribonucleotide)n+m + AMP + beta-nicotinamide D-nucleotide.. Functionally, DNA ligase that catalyzes the formation of phosphodiester linkages between 5'-phosphoryl and 3'-hydroxyl groups in double-stranded DNA using NAD as a coenzyme and as the energy source for the reaction. It is essential for DNA replication and repair of damaged DNA. This is DNA ligase from Salinispora arenicola (strain CNS-205).